The primary structure comprises 223 residues: Ubiquitin carboxyl-terminal hydrolase isozyme L1 (223 aa).

The residue at position 1 (Met1) is an N-acetylmethionine. The region spanning 2 to 221 is the UCH catalytic domain; the sequence is QLKPMEINPE…VRFSAVALCK (220 aa). The interval 5–10 is interaction with ubiquitin; the sequence is PMEINP. Cys90 acts as the Nucleophile in catalysis. At Ser125 the chain carries Phosphoserine. His161 acts as the Proton donor in catalysis. The tract at residues 211–216 is interaction with ubiquitin; the sequence is EVRFSA. The S-farnesyl cysteine moiety is linked to residue Cys220. Positions 221-223 are cleaved as a propeptide — removed in mature form; that stretch reads KAA.

The protein belongs to the peptidase C12 family. In terms of assembly, monomer. Homodimer. Interacts with COPS5 and SNCA. In terms of processing, O-glycosylated. In terms of tissue distribution, expressed in the placenta at all stages of pregnancy. Expression increases as pregnancy progresses.

The protein localises to the cytoplasm. Its subcellular location is the endoplasmic reticulum membrane. It is found in the nucleus. It carries out the reaction Thiol-dependent hydrolysis of ester, thioester, amide, peptide and isopeptide bonds formed by the C-terminal Gly of ubiquitin (a 76-residue protein attached to proteins as an intracellular targeting signal).. Its function is as follows. Ubiquitin-protein hydrolase involved both in the processing of ubiquitin precursors and of ubiquitinated proteins. This enzyme is a thiol protease that recognizes and hydrolyzes a peptide bond at the C-terminal glycine of ubiquitin. Also binds to free monoubiquitin and may prevent its degradation in lysosomes. The homodimer may have ATP-independent ubiquitin ligase activity. The sequence is that of Ubiquitin carboxyl-terminal hydrolase isozyme L1 (UCHL1) from Macaca fascicularis (Crab-eating macaque).